The chain runs to 2481 residues: Tetratricopeptide repeat protein 28 (2481 aa).

Met-1 carries the post-translational modification N-acetylmethionine. Pro residues predominate over residues 1–14 (MEQSPPPAPEPTQG). Residues 1-48 (MEQSPPPAPEPTQGPTPARSRRRREPESPPASAPIPLFGADTIGQRSP) are disordered. Ser-28 carries the phosphoserine modification. TPR repeat units follow at residues 58–91 (FVEK…DPQN), 93–125 (ILYS…NPKW), 126–159 (PKAY…DPKS), 196–229 (FVVV…GTCS), 234–267 (GSVF…AKTL), 274–307 (CRAH…AMKL), 314–347 (SSAL…AKQS), 354–387 (AREL…AKDL), 394–427 (ARAY…AQEL), 434–467 (MRAY…AEDL), 474–507 (GRAS…AQEL), 514–547 (GRAY…SMEV), 554–587 (ASTH…AREL), 594–627 (ARAL…APDL), 634–667 (GKVC…AKDL), 674–707 (AKAY…AQSL), 714–747 (FRAL…AHQV), 754–787 (ASAY…YQEL), 794–827 (CRAH…GQKL), 834–867 (AQVY…LQQL), 877–910 (GRAY…AQSL), 917–950 (AKAY…AHEL), 957–990 (AQAY…ARDM), 997–1030 (SDAA…AEET), 1037–1070 (GRAY…AAQM), 1077–1110 (TVSY…AEQL), 1117–1150 (AKIR…FETI), and 1169–1202 (TSSY…AFAD). Ser-1590 bears the Phosphoserine mark. Disordered stretches follow at residues 2004-2055 (FVSK…DEEE), 2075-2161 (NTCF…DPQE), and 2176-2339 (AVER…PADA). Polar residues-rich tracts occupy residues 2029-2043 (AYLQ…QLPP) and 2096-2122 (SVSS…NSPF). Ser-2104 is subject to Phosphoserine. The segment covering 2130–2146 (SSDTGESDQSSTETDST) has biased composition (low complexity). Over residues 2149–2159 (SQEESNPKLDP) the composition is skewed to basic and acidic residues. The segment covering 2183-2214 (SGGQVSKSNNPEDGVQAPSSTAVFRASETSAF) has biased composition (polar residues). 2 positions are modified to phosphoserine: Ser-2224 and Ser-2251. Residues 2238-2282 (RSSSLPKVSSGYSSPTTSEMSIKDSPSQHSGRPSPGCDSQTSQLD) show a composition bias toward polar residues. Positions 2307 to 2339 (SPSSGHQSPAGSAPSPALSYSSAGSARSSPADA) are enriched in low complexity. 2 positions are modified to phosphoserine: Ser-2393 and Ser-2398. The disordered stretch occupies residues 2420-2467 (QHDGAPPKAPPNGHWRTETTSLGSLPLPAGPPATAPARPLRLPSGNGY).

Interacts with AURKB. Widely expressed in fetal tissues. In adult tissues, expressed in testis and ovary and, at much lower levels, in kidney and pancreas.

The protein localises to the cytoplasm. Its subcellular location is the cytoskeleton. It is found in the microtubule organizing center. The protein resides in the centrosome. It localises to the spindle. The protein localises to the spindle pole. Its subcellular location is the midbody. During mitosis, may be involved in the condensation of spindle midzone microtubules, leading to the formation of midbody. The chain is Tetratricopeptide repeat protein 28 (TTC28) from Homo sapiens (Human).